The following is a 907-amino-acid chain: Probable dipeptidyl-aminopeptidase B (907 aa).

Basic and acidic residues predominate over residues 1-11 (MYDQVPYRDTD). The interval 1 to 71 (MYDQVPYRDT…RGKPDEDDDL (71 aa)) is disordered. The Cytoplasmic segment spans residues 1–88 (MYDQVPYRDT…LKPMERKVRR (88 aa)). Low complexity predominate over residues 22-36 (SDSNRSSIDTTSTTS). Residues 89–109 (AMYLLAFLMIGGWFLALAVYV) form a helical; Signal-anchor for type II membrane protein membrane-spanning segment. The Vacuolar segment spans residues 110–907 (SREHFGTPDT…PLRKRNRELV (798 aa)). Residues Asn-185 and Asn-341 are each glycosylated (N-linked (GlcNAc...) asparagine). Catalysis depends on Ser-746, which acts as the Charge relay system. An N-linked (GlcNAc...) asparagine glycan is attached at Asn-800. Active-site charge relay system residues include Asp-823 and His-856.

It belongs to the peptidase S9B family.

The protein localises to the vacuole membrane. It carries out the reaction Release of an N-terminal dipeptide, Xaa-Yaa-|-Zaa-, from a polypeptide, preferentially when Yaa is Pro, provided Zaa is neither Pro nor hydroxyproline.. Functionally, type IV dipeptidyl-peptidase which removes N-terminal dipeptides sequentially from polypeptides having unsubstituted N-termini provided that the penultimate residue is proline. The protein is Probable dipeptidyl-aminopeptidase B (DAPB) of Tuber melanosporum (strain Mel28) (Perigord black truffle).